The chain runs to 104 residues: uncharacterized protein (104 aa).

The interval 62–92 (SSPAASSHPRKRGKEKKERTPTERLAAPARK) is disordered.

This is an uncharacterized protein from Human adenovirus B serotype 7 (HAdV-7).